A 422-amino-acid polypeptide reads, in one-letter code: UDP-N-acetylglucosamine 1-carboxyvinyltransferase (422 aa).

Residue 22–23 (KN) coordinates phosphoenolpyruvate. R94 contributes to the UDP-N-acetyl-alpha-D-glucosamine binding site. The active-site Proton donor is C118. C118 is subject to 2-(S-cysteinyl)pyruvic acid O-phosphothioketal. Residues 123–127 (RPVDL), D309, and I331 each bind UDP-N-acetyl-alpha-D-glucosamine.

This sequence belongs to the EPSP synthase family. MurA subfamily.

It is found in the cytoplasm. It carries out the reaction phosphoenolpyruvate + UDP-N-acetyl-alpha-D-glucosamine = UDP-N-acetyl-3-O-(1-carboxyvinyl)-alpha-D-glucosamine + phosphate. It functions in the pathway cell wall biogenesis; peptidoglycan biosynthesis. In terms of biological role, cell wall formation. Adds enolpyruvyl to UDP-N-acetylglucosamine. In Cereibacter sphaeroides (strain ATCC 17025 / ATH 2.4.3) (Rhodobacter sphaeroides), this protein is UDP-N-acetylglucosamine 1-carboxyvinyltransferase.